Consider the following 127-residue polypeptide: Aspartate 1-decarboxylase (127 aa).

Serine 25 serves as the catalytic Schiff-base intermediate with substrate; via pyruvic acid. Serine 25 carries the pyruvic acid (Ser) modification. Position 57 (threonine 57) interacts with substrate. Residue tyrosine 58 is the Proton donor of the active site. Residue glycine 73–alanine 75 participates in substrate binding.

It belongs to the PanD family. As to quaternary structure, heterooctamer of four alpha and four beta subunits. Pyruvate serves as cofactor. In terms of processing, is synthesized initially as an inactive proenzyme, which is activated by self-cleavage at a specific serine bond to produce a beta-subunit with a hydroxyl group at its C-terminus and an alpha-subunit with a pyruvoyl group at its N-terminus.

The protein resides in the cytoplasm. It carries out the reaction L-aspartate + H(+) = beta-alanine + CO2. The protein operates within cofactor biosynthesis; (R)-pantothenate biosynthesis; beta-alanine from L-aspartate: step 1/1. Catalyzes the pyruvoyl-dependent decarboxylation of aspartate to produce beta-alanine. This is Aspartate 1-decarboxylase from Listeria monocytogenes serovar 1/2a (strain ATCC BAA-679 / EGD-e).